Reading from the N-terminus, the 112-residue chain is Putative pterin-4-alpha-carbinolamine dehydratase (112 aa).

The protein belongs to the pterin-4-alpha-carbinolamine dehydratase family.

The enzyme catalyses (4aS,6R)-4a-hydroxy-L-erythro-5,6,7,8-tetrahydrobiopterin = (6R)-L-erythro-6,7-dihydrobiopterin + H2O. This Hahella chejuensis (strain KCTC 2396) protein is Putative pterin-4-alpha-carbinolamine dehydratase.